Consider the following 188-residue polypeptide: MAITIPNREEILADWEAHPMRKPRIEKVTINIGVGESGERLTKAEIMLERLTGQKPIRRKAKKTNRDFGIRRGEPIAVKVTLRGPKAYEMLKRLLAAVDNRLKASSFDEHGNVCFGIDEHINIPGVEYDPEIGIFGMDVCVTLERPGFRVARRKRKRAKIPTRHKLTKEEGMVYMMEEFGVEIVEEEG.

This sequence belongs to the universal ribosomal protein uL5 family. As to quaternary structure, part of the 50S ribosomal subunit; contacts the 5S rRNA and probably tRNA. Forms a bridge to the 30S subunit in the 70S ribosome.

This is one of the proteins that bind and probably mediate the attachment of the 5S RNA into the large ribosomal subunit, where it forms part of the central protuberance. In the 70S ribosome it contacts protein S13 of the 30S subunit (bridge B1b), connecting the 2 subunits; this bridge is implicated in subunit movement. May contact the P site tRNA; the 5S rRNA and some of its associated proteins might help stabilize positioning of ribosome-bound tRNAs. The chain is Large ribosomal subunit protein uL5 from Pyrococcus abyssi (strain GE5 / Orsay).